The following is a 625-amino-acid chain: tRNA-guanine(15) transglycosylase (625 aa).

Asp86 acts as the Nucleophile in catalysis. 2 residues coordinate substrate: Asp121 and Gly184. The PUA domain maps to 546–621; it reads GLRVVVDDES…VAVKVHEGVN (76 aa).

Belongs to the archaeosine tRNA-ribosyltransferase family. The cofactor is Zn(2+).

It catalyses the reaction guanosine(15) in tRNA + 7-cyano-7-deazaguanine = 7-cyano-7-carbaguanosine(15) in tRNA + guanine. Its pathway is tRNA modification; archaeosine-tRNA biosynthesis. Exchanges the guanine residue with 7-cyano-7-deazaguanine (preQ0) at position 15 in the dihydrouridine loop (D-loop) of archaeal tRNAs. This is tRNA-guanine(15) transglycosylase from Picrophilus torridus (strain ATCC 700027 / DSM 9790 / JCM 10055 / NBRC 100828 / KAW 2/3).